The primary structure comprises 303 residues: 1-phosphofructokinase (303 aa).

ATP is bound at residue G248–D249. Residue D249 is the Proton acceptor of the active site.

It belongs to the carbohydrate kinase PfkB family.

It catalyses the reaction beta-D-fructose 1-phosphate + ATP = beta-D-fructose 1,6-bisphosphate + ADP + H(+). In terms of biological role, catalyzes the ATP-dependent phosphorylation of fructose-l-phosphate to fructose-l,6-bisphosphate. The chain is 1-phosphofructokinase (fruK) from Bacillus subtilis (strain 168).